We begin with the raw amino-acid sequence, 81 residues long: Sulfur carrier protein TusA (81 aa).

Cys-19 serves as the catalytic Cysteine persulfide intermediate.

Belongs to the sulfur carrier protein TusA family. Interacts with IscS.

The protein localises to the cytoplasm. It functions in the pathway tRNA modification. Sulfur carrier protein involved in sulfur trafficking in the cell. Part of a sulfur-relay system required for 2-thiolation during synthesis of 2-thiouridine of the modified wobble base 5-methylaminomethyl-2-thiouridine (mnm(5)s(2)U) in tRNA. Interacts with IscS and stimulates its cysteine desulfurase activity. Accepts an activated sulfur from IscS, which is then transferred to TusD, and thus determines the direction of sulfur flow from IscS to 2-thiouridine formation. Also appears to be involved in sulfur transfer for the biosynthesis of molybdopterin. The protein is Sulfur carrier protein TusA of Klebsiella pneumoniae subsp. pneumoniae (strain ATCC 700721 / MGH 78578).